Here is a 645-residue protein sequence, read N- to C-terminus: Protein FAM47B (645 aa).

Composition is skewed to basic and acidic residues over residues 1 to 11, 238 to 251, and 288 to 299; these read MGDRRPQDRPR, EPPE…RVDP, and PETRVSHLHPEP. Disordered stretches follow at residues 1-23 and 168-321; these read MGDR…WYCD and AREK…SLCP.

It belongs to the FAM47 family.

This is Protein FAM47B (FAM47B) from Homo sapiens (Human).